The primary structure comprises 469 residues: 3-isopropylmalate dehydratase large subunit (469 aa).

[4Fe-4S] cluster is bound by residues cysteine 347, cysteine 407, and cysteine 410.

Belongs to the aconitase/IPM isomerase family. LeuC type 1 subfamily. Heterodimer of LeuC and LeuD. The cofactor is [4Fe-4S] cluster.

It carries out the reaction (2R,3S)-3-isopropylmalate = (2S)-2-isopropylmalate. It participates in amino-acid biosynthesis; L-leucine biosynthesis; L-leucine from 3-methyl-2-oxobutanoate: step 2/4. Functionally, catalyzes the isomerization between 2-isopropylmalate and 3-isopropylmalate, via the formation of 2-isopropylmaleate. The sequence is that of 3-isopropylmalate dehydratase large subunit from Prochlorococcus marinus subsp. pastoris (strain CCMP1986 / NIES-2087 / MED4).